A 535-amino-acid chain; its full sequence is NAD(P)H-quinone oxidoreductase chain 4 2 (535 aa).

14 consecutive transmembrane segments (helical) span residues 9-29 (FPWL…IPLI), 51-71 (WFAL…FYVG), 106-126 (LILL…PVTL), 130-150 (LFYF…AVQD), 152-172 (LLFF…LSIW), 184-204 (FILY…AMAF), 227-247 (LLLY…FPLH), 258-278 (TAPV…YALM), 290-310 (LYFA…AALT), 326-346 (ISHM…GMSG), 347-367 (AMLQ…LVGA), 399-419 (LASL…VFIG), 432-452 (LVVV…LLSM), and 479-499 (VFII…PKLV).

It belongs to the complex I subunit 4 family.

Its subcellular location is the cellular thylakoid membrane. The enzyme catalyses a plastoquinone + NADH + (n+1) H(+)(in) = a plastoquinol + NAD(+) + n H(+)(out). It catalyses the reaction a plastoquinone + NADPH + (n+1) H(+)(in) = a plastoquinol + NADP(+) + n H(+)(out). In terms of biological role, NDH-1 shuttles electrons from NAD(P)H, via FMN and iron-sulfur (Fe-S) centers, to quinones in the respiratory chain. The immediate electron acceptor for the enzyme in this species is believed to be plastoquinone. Couples the redox reaction to proton translocation (for every two electrons transferred, four hydrogen ions are translocated across the cytoplasmic membrane), and thus conserves the redox energy in a proton gradient. This is NAD(P)H-quinone oxidoreductase chain 4 2 from Synechococcus sp. (strain JA-3-3Ab) (Cyanobacteria bacterium Yellowstone A-Prime).